Here is a 125-residue protein sequence, read N- to C-terminus: Small ribosomal subunit protein uS13 (125 aa).

The disordered stretch occupies residues 99 to 125; the sequence is RGQRTKTNARTRKGKRKTVANKKMAAK.

The protein belongs to the universal ribosomal protein uS13 family. Part of the 30S ribosomal subunit. Forms a loose heterodimer with protein S19. Forms two bridges to the 50S subunit in the 70S ribosome.

Functionally, located at the top of the head of the 30S subunit, it contacts several helices of the 16S rRNA. In the 70S ribosome it contacts the 23S rRNA (bridge B1a) and protein L5 of the 50S subunit (bridge B1b), connecting the 2 subunits; these bridges are implicated in subunit movement. Contacts the tRNAs in the A and P-sites. This is Small ribosomal subunit protein uS13 from Borrelia turicatae (strain 91E135).